A 167-amino-acid polypeptide reads, in one-letter code: Large ribosomal subunit protein uL10 (167 aa).

It belongs to the universal ribosomal protein uL10 family. Part of the ribosomal stalk of the 50S ribosomal subunit. The N-terminus interacts with L11 and the large rRNA to form the base of the stalk. The C-terminus forms an elongated spine to which L12 dimers bind in a sequential fashion forming a multimeric L10(L12)X complex.

Its function is as follows. Forms part of the ribosomal stalk, playing a central role in the interaction of the ribosome with GTP-bound translation factors. The chain is Large ribosomal subunit protein uL10 from Chromohalobacter salexigens (strain ATCC BAA-138 / DSM 3043 / CIP 106854 / NCIMB 13768 / 1H11).